The following is a 272-amino-acid chain: Putative MgpC-like protein MPN_102 (272 aa).

It belongs to the MgpC family.

This is Putative MgpC-like protein MPN_102 from Mycoplasma pneumoniae (strain ATCC 29342 / M129 / Subtype 1) (Mycoplasmoides pneumoniae).